The sequence spans 333 residues: Adenosine deaminase (333 aa).

Zn(2+) is bound by residues H12 and H14. Substrate-binding residues include H14, D16, and G170. H197 serves as a coordination point for Zn(2+). The active-site Proton donor is E200. A Zn(2+)-binding site is contributed by D278. D279 contributes to the substrate binding site.

It belongs to the metallo-dependent hydrolases superfamily. Adenosine and AMP deaminases family. Adenosine deaminase subfamily. Requires Zn(2+) as cofactor.

The catalysed reaction is adenosine + H2O + H(+) = inosine + NH4(+). It catalyses the reaction 2'-deoxyadenosine + H2O + H(+) = 2'-deoxyinosine + NH4(+). Functionally, catalyzes the hydrolytic deamination of adenosine and 2-deoxyadenosine. The protein is Adenosine deaminase of Salmonella dublin (strain CT_02021853).